A 3432-amino-acid chain; its full sequence is MNYSWIHEYYLGTCIQEEKVFSIYSASTSNNSFSFPSIPTTTTHFSNSVLNQTTTTTTTTTTTTTTTNTPPPPPQSQLQAQLQSQSQQNNQHHRPLSPNGGFFSITNSSSISDQDLRSRLKLYDDQPQQQQQQQASNKSKLSQKQTSQLNISGNNSGNSTPPLPTISNSNNSINFIHSPPPTPPLLKTPILSSHNHNNNNNNNNNNNNNNNNNNNNNNNNNNNNNNNNNNNNNNNNHNINTIDIDLVSPPPPLLLPSGSLSPLSFKHGYNSGLGGNFCSNSIANGIHLGKKPSEFQSHNNNVLLKILNYKYPPIEISTIFQREYFILSYLNDLDGTLKLIKTQSEYGNIVALIFEENGYKSLTSYYNVLSLLNGVGGCASFTNYNLNYNINNSLNNLNNNNNNNNNSYNNNYNNNNNNNGQVTSPILNNTELSQSSASAFKPFQLNSSTNSTGSPLIITSQPMPFQLNSNSNTTASSSSPITHSNLNTAITSTTTSNSNSNNNSNNNNSGGGGGGGGGGGGGGGTKINNKRRASLTPTSTPLSASPLLFNTKKYADIDINTFLSIAIQLTTILESIHGKGCIHRDIRPNNIYINSECKVKLANFQFSIFKKTSSFLKKSKFQQQHQQSENNNNNTLDSDITMIDNIDLTNSYNNNNNSSTNNIFFNFNNDYDEESINELFKSYPDLSRFSTSTYYYISPEDTGRTIHPVDEKSDLYSLGVTFFELLTGRLPFQSSDLSELIHSHLAKKPPLVIDLNQNVPLILSNIVNKLLQKSPDDRYQSAYGLKKDLEMFKLQLSIINNNNNNNNNNNNNNNNNLSNQQITDFKLGAYDVLNRPYISNELYSRKKELNSILTTIKRVSKGGKEFIIVSGLSGVGKTSLINQACKKSNTKVRFICGKFDQFNKSPYSAIIEALSQLVNLILSLSPLELEFYKDRLLRTLGSNISVITEVIPKLCLIVGTHYKVLPLPSSESQNRFDLAFKDFLRVFAEEGNPLVLFLDDFQRADPSSYRLIKLLMESNNSTSNNSTFLNCNGNNNNNNNNFSINNNNNNNNGCNNNNNNNNNNINNNNNNNNNNNINNSGGSLNYLLVIGAFRENEPNFELDFGDLSNFITMKIVLKNLDLKYVNLMVSTTLHASPQETLSLSQVVLSKTHGNAFFVILFLRTLFDESLVYFSTTTDKWCWNIEKIQKREFTDNVVEFMVENLKQLDKQAQRVLHLASCIGNSFDLDMLAFVAELSPEQCLKIMAEIISRDLIVITQQPTTTTNNNTTNNTNNNNTNNNNNNTNGNNSDINQTNLIRYHFVHDRIQQAAFNLVLLKDEKKQIHLNIGRILYKKYYVQSNNNSSNNNNNNNNNNNINIFEILNQYNFGIELIKDQDERLNLSKLNFEAGCKANSSTAFNYGNQYFQIALNLLFGESEQGEDDDLVWNEHYQMLFNIYLEKSQSEFMVGNCQESDRLLEKALQRAKKDEHIGEVTARRVKQYTLQLRFDDCIEMSIEFLKRQGIFLDINLSMDTLTKDYQKFKNRLNGQPISTIMNKLVGGGGGGSGSSNNSNNGSVVSPLVDCCLRVMVIMMPSLYLNNLNVLTLLLMKFVEYTLENGISSWSSTAFAMFGMVVSIGHFCDYSVGYQFGQYAMSLKEKYSEQPGTKGMVTLLYSGYIHHLGNHLSTSIPIVKQAFLESIEYGDFGCACYASVNLILHRILLGLPLDETYQLSKQYSNYIEQYYFKPMYQIVVSLQNFILELTGTDLLPEQQQPQQQTPNNSNSSCGSNCSSGGNSNNSNLNCSSGSSFASGSNYNNININNNNNNNNNNNNNNNNNNYNAEWDIEEFENDLLSTPDVHCPIAYHFISKCQTCYLFGDFESAWQAVLRGENSIIGIFAHTHLFSVLYLFKSLIIMKNLGNQHNNNNNNNSNHIYKTYGIENENNNDSNNNNYNFKIYSLEEEIKMAKDCIEKLESYSEQSYENFSSQLMLAKAEFERINGNFEQAMEYFSEAISLAQQFKYQQYEALANELSSRMYIQIKKFAVAKAYLIESHQCYKSWGALRKANQLELEFPNLLNFNRLNVQTKRSKRFEYSNNNNNNNSNNNNNNANQSQASISLSSSTSFNSKIIGNSSNSSNNNFNNNNNNNNNNNNLMAISSSSSICSSGSGSYGSSNGISGTTQLNSNYNSNFFEPSLSIRRRSQDGTVSTKNLSRYPVDAVDLCSVIKVSHSLAEEIYFDRLLKRLMKVVIKNAGASRGFLLLIEDKITKELFINPTSKTNITLLGDLSVAASALVNNEKVIVEVFINNNINNNNININSSGYNNTNKNDNNNNNNYSPAYNNNNNNNNNNNNNNNNNNNNNNNNNNNNNNKKQINEIIKNDSFNEEDGTWNMCLSMINYVKRTLTPLLITNAIQDNTFSEDPYVKKRNPKSILVLPIVYQGNLVSILYLENNFSTGIFSNEKLEILNLISSQIAISFSNARLFIKVNQLANQAFLAKEEAEKANKAKSDFISNMSHEMRTPLNHIIGSIELLKSYNHLFNSDQKELLDISAKSSESLLFMVNNILDLSKVEQGKTKLNLTNFNLVSFLEDSICAISPNAHLKGVYIALFINPCLSKIPVIGDINILRQVIVNLLTNAIKFTESGQVYIKLNLSINNNPTTTNNKKQLNTDNDGDDDDDDDNENLDENNEDTSIDLDDNGKVIYQKNPKSNQCYIVNIEVVDSGIGIKNEDFGKLFQRFSQIECGSNRAYDGTGLGLSIVKDLVCNLMKGDIGVKSKVGVGSTFHFCVELGKSFDESMSNKYHLPLELLNNNNNNNNNNNNNNNNNNNNNNNNNNNNNNINCSNGGSVNINSSGNSVFSCSSSNSGTRVTILEENKIICDQLSMLCVSNGLNDLTVLNDIFSLELLADCLDCYKPPIQSPRFGSTSSSLVLLSPRSTLNLSPKIISPRPYPNNQNNFLSSSPQMLSPLPNSPLSSSQQHQNNNNINNNNINNNNNNNNNNNNNNNNNNNNNNNNNNNNNNNNNNNNNNNGVGLSINLSNLNNHNHNNSHNNNSQQIQYQNSKEIFIIGLPFSYNEDKILTLVENIKSLTYSASFNKRGNISISSNVNKVEFILVTHILLSANSREILNNSNIYIVNRPIKMKTLHKTFLKIFENNNNNNINNINNNNNKSNSPIPEDSKHSQYKYQKQLSESNICYTKKPISPSPSSATVILEQQQDHNLQSPTAITTNLISEEYDHFDSNSTPPPNTATTTTTTTTLANSALANSTLANSISTTSHSSTSTSSSSSSSSSSSSSLSSTTTITTTTTTTSNLDKMLIDKKITSTQELKILIVEDNEMNANIMFKMLAKLGIQCEPHLALNGLEGVKKAKNEEYDLIIMDIQMPVMCGLTATSLIRKHEGTKKRTPIVAITASAMNGEMSKALAAGCDDYLSKPLQLKDLRYVINRYGPITLEYNS.

3 stretches are compositionally biased toward low complexity: residues 44–68, 76–90, and 126–145; these read HFSN…TTTN, SQLQ…QQNN, and QPQQ…SQKQ. Disordered regions lie at residues 44–109 and 124–240; these read HFSN…TNSS and DDQP…HNIN. Polar residues predominate over residues 146–157; sequence TSQLNISGNNSG. Low complexity-rich tracts occupy residues 165-177 and 187-238; these read TISN…NFIH and KTPI…NNHN. A Protein kinase domain is found at 263 to 792; it reads LSFKHGYNSG…YGLKKDLEMF (530 aa). ATP is bound by residues 269–277 and lysine 305; that span reads YNSGLGGNF. A compositionally biased stretch (low complexity) spans 399 to 419; sequence NNNNNNNNSYNNNYNNNNNNN. Disordered regions lie at residues 399–426 and 443–542; these read NNNN…TSPI and FQLN…STPL. The segment covering 443–467 has biased composition (polar residues); that stretch reads FQLNSSTNSTGSPLIITSQPMPFQL. Residues 468–479 are compositionally biased toward low complexity; that stretch reads NSNSNTTASSSS. Positions 480–490 are enriched in polar residues; the sequence is PITHSNLNTAI. Over residues 491-508 the composition is skewed to low complexity; that stretch reads TSTTTSNSNSNNNSNNNN. A compositionally biased stretch (gly residues) spans 509–525; the sequence is SGGGGGGGGGGGGGGGT. The active-site Proton acceptor; for protein kinase activity is aspartate 585. The AAA stretch occupies residues 863–1121; the sequence is GKEFIIVSGL…TMKIVLKNLD (259 aa). 871–878 is a binding site for ATP; the sequence is GLSGVGKT. Disordered stretches follow at residues 1040–1077 and 1261–1290; these read NNFS…NNNI and TTTT…NNSD. Residues 1261 to 1288 show a composition bias toward low complexity; that stretch reads TTTTNNNTTNNTNNNNTNNNNNNTNGNN. The next 2 helical transmembrane spans lie at 1567–1587 and 1599–1619; these read VMVI…TLLL and ISSW…IGHF. The TPR repeat unit spans residues 1965–1998; that stretch reads SQLMLAKAEFERINGNFEQAMEYFSEAISLAQQF. Disordered stretches follow at residues 2071–2095 and 2299–2349; these read EYSN…QASI and GYNN…NNNK. The segment covering 2073-2095 has biased composition (low complexity); it reads SNNNNNNNSNNNNNNANQSQASI. A GAF domain is found at 2215-2465; that stretch reads YFDRLLKRLM…SNARLFIKVN (251 aa). Residues 2491–2769 form the Histidine kinase domain; sequence NMSHEMRTPL…TFHFCVELGK (279 aa). Phosphohistidine; by autocatalysis is present on histidine 2494. Low complexity predominate over residues 2637–2648; the sequence is TTTNNKKQLNTD. Disordered regions lie at residues 2637–2673, 2785–2815, 2917–3030, 3134–3160, and 3247–3281; these read TTTN…SIDL, LLNN…NNNN, LSPK…NNNS, NNNI…HSQY, and NSIS…TITT. The span at 2649–2673 shows a compositional bias: acidic residues; that stretch reads NDGDDDDDDDNENLDENNEDTSIDL. 3 stretches are compositionally biased toward low complexity: residues 2787–2815, 2935–3029, and 3134–3145; these read NNNN…NNNN, LSSS…HNNN, and NNNINNINNNNN. The 120-residue stretch at 3305-3424 folds into the Response regulatory domain; it reads KILIVEDNEM…DLRYVINRYG (120 aa). Residue aspartate 3356 is modified to 4-aspartylphosphate.

Belongs to the protein kinase superfamily. Ser/Thr protein kinase family. In terms of processing, activation probably requires transfer of a phosphate group between a histidine in the kinase core (transmitter) domain and an aspartate of the receiver domain.

It is found in the membrane. It carries out the reaction ATP + protein L-histidine = ADP + protein N-phospho-L-histidine.. The enzyme catalyses L-seryl-[protein] + ATP = O-phospho-L-seryl-[protein] + ADP + H(+). It catalyses the reaction L-threonyl-[protein] + ATP = O-phospho-L-threonyl-[protein] + ADP + H(+). Its function is as follows. Acts as a receptor histidine kinase for a signal transduction pathway. This protein undergoes an ATP-dependent autophosphorylation at a conserved histidine residue in the kinase core, and a phosphoryl group is then transferred to a conserved aspartate residue in the receiver domain. The chain is Hybrid signal transduction histidine kinase G (dhkG) from Dictyostelium discoideum (Social amoeba).